The following is a 373-amino-acid chain: Cobalt-precorrin-5B C(1)-methyltransferase (373 aa).

This sequence belongs to the CbiD family.

The catalysed reaction is Co-precorrin-5B + S-adenosyl-L-methionine = Co-precorrin-6A + S-adenosyl-L-homocysteine. It functions in the pathway cofactor biosynthesis; adenosylcobalamin biosynthesis; cob(II)yrinate a,c-diamide from sirohydrochlorin (anaerobic route): step 6/10. Its function is as follows. Catalyzes the methylation of C-1 in cobalt-precorrin-5B to form cobalt-precorrin-6A. The chain is Cobalt-precorrin-5B C(1)-methyltransferase from Listeria monocytogenes serovar 1/2a (strain ATCC BAA-679 / EGD-e).